Here is a 135-residue protein sequence, read N- to C-terminus: Cofilin-4 (135 aa).

One can recognise an ADF-H domain in the interval 3 to 135 (SCASINDEVI…SQSLVEERCK (133 aa)).

It belongs to the actin-binding proteins ADF family.

It localises to the cytoplasm. The protein resides in the cytoskeleton. Controls actin polymerization and depolymerization. The sequence is that of Cofilin-4 (cofE) from Dictyostelium discoideum (Social amoeba).